The following is a 622-amino-acid chain: Intermediate filament protein ifc-2 (622 aa).

The head stretch occupies residues Ser19 to Glu54. Residues Glu51 to Thr399 form the IF rod domain. Positions Ile55 to Leu86 are coil 1A. Residues Arg87–Leu99 form a linker 1 region. A coil 1B region spans residues Phe100 to Glu237. The segment at Leu238–His255 is linker 12. The tract at residues Glu256–Thr399 is coil 2. Residues Tyr400–Glu550 form a tail region. The LTD domain occupies Ser509 to Asp622.

This sequence belongs to the intermediate filament family. In terms of tissue distribution, expressed in intestinal cells and at desmosomes in intestine and pharynx of the larva.

It is found in the cytoplasm. In terms of biological role, cytoplasmic intermediate filaments provide mechanical strength to cells. Not essential protein, although its absence leads to mild defects in locomotion. In Caenorhabditis elegans, this protein is Intermediate filament protein ifc-2 (ifc-2).